Reading from the N-terminus, the 544-residue chain is Cytochrome P450 monooxygenase tenB (544 aa).

Residues Leu13–Trp33 form a helical membrane-spanning segment. Over residues Phe438–Lys448 the composition is skewed to basic and acidic residues. The segment at Phe438–Asp467 is disordered. Cys486 is a heme binding site.

Belongs to the cytochrome P450 family. It depends on heme as a cofactor.

The protein localises to the membrane. The protein operates within secondary metabolite biosynthesis. Cytochrome P450 monooxygenase; part of the gene cluster that mediates the biosynthesis of tenellin-type 2-pyridones, iron-chelating compounds involved in iron stress tolerance, competition with the natural competitor fungus Metarhizium robertsii and insect hosts infection. TenB catalyzes the selective N-hydroxylation of the 2-pyridone nitrogen of yield tellinin and 15-hydroxytellenin (15-HT), respectively. The pathway begins with the assembly of the polyketide-amino acid backbone by the hybrid PKS-NRPS tenS with the help of the enoyl reductase tenC. These enzymes catalyze the synthesis of the pyrrolidine-2-dione intermediates pretellinin A, 11-hydropretellenin A, 12-hydropretellenin A, 13-hydropretellenin A, 14-hydropretellenin A, 12-oxopretellenin A and prototellinin D. The cytochrome P450 monooxygenase tenA then catalyzes an oxidative ring expansion of pretenellin A and 14-hydropretellenin A to form the 2-pyridone core, leading to pretenellin B and pyridovericin, respectively. The cytochrome P450 monooxygenase tenB is then required for the selective N-hydroxylation of the 2-pyridone nitrogen of yield tellinin and 15-hydroxytellenin (15-HT), respectively. The UDP-glucosyltransferase GT1 and the methyltransferase MT1, located outside the tenS gene cluster, contribute to the stepwise glycosylation and methylation of 15-HT to obtain the glycoside pyridovericin-N-O-(4-O-methyl-beta-D-glucopyranoside) (PMGP). Additional related compounds such as 1-O-methyl-15-HT, (8Z)-1-O-methyl-15-HT, and O-methyltenellin A are also produced but the enzymes involved in their biosynthesis have still to be determined. The polypeptide is Cytochrome P450 monooxygenase tenB (Beauveria bassiana (strain ARSEF 2860) (White muscardine disease fungus)).